A 320-amino-acid chain; its full sequence is Iminosuccinate reductase (320 aa).

Catalysis depends on lysine 67, which acts as the Proton donor/acceptor. NAD(+)-binding positions include arginine 110, 137 to 138 (HQ), asparagine 159, serine 199, 219 to 222 (MGTD), lysine 226, and glycine 291.

It belongs to the ornithine cyclodeaminase/mu-crystallin family. BhcD subfamily.

The catalysed reaction is L-aspartate + NAD(+) = iminosuccinate + NADH + H(+). Its function is as follows. Imine reductase that catalyzes the NADH-dependent reduction of iminosuccinate to L-aspartate. Is essential for the growth of P.denitrificans in the presence of glycolate and glyoxylate since it functions in glyoxylate assimilation via the beta-hydroxyaspartate cycle (BHAC). Thereby BhcD regenerates the amino group donor for the first step of the BHAC. In Paracoccus denitrificans (strain Pd 1222), this protein is Iminosuccinate reductase.